Reading from the N-terminus, the 160-residue chain is 2-C-methyl-D-erythritol 2,4-cyclodiphosphate synthase (160 aa).

The a divalent metal cation site is built by D9 and H11. Residues 9–11 and 35–36 contribute to the 4-CDP-2-C-methyl-D-erythritol 2-phosphate site; these read DVH and HS. Residue H43 participates in a divalent metal cation binding. Residues 57-59, 62-66, 101-107, 133-136, F140, and R143 each bind 4-CDP-2-C-methyl-D-erythritol 2-phosphate; these read DIG, FPDTD, AEAPKMA, and TTSE.

Belongs to the IspF family. Homotrimer. Requires a divalent metal cation as cofactor.

It catalyses the reaction 4-CDP-2-C-methyl-D-erythritol 2-phosphate = 2-C-methyl-D-erythritol 2,4-cyclic diphosphate + CMP. The protein operates within isoprenoid biosynthesis; isopentenyl diphosphate biosynthesis via DXP pathway; isopentenyl diphosphate from 1-deoxy-D-xylulose 5-phosphate: step 4/6. Its function is as follows. Involved in the biosynthesis of isopentenyl diphosphate (IPP) and dimethylallyl diphosphate (DMAPP), two major building blocks of isoprenoid compounds. Catalyzes the conversion of 4-diphosphocytidyl-2-C-methyl-D-erythritol 2-phosphate (CDP-ME2P) to 2-C-methyl-D-erythritol 2,4-cyclodiphosphate (ME-CPP) with a corresponding release of cytidine 5-monophosphate (CMP). This is 2-C-methyl-D-erythritol 2,4-cyclodiphosphate synthase from Methylobacillus flagellatus (strain ATCC 51484 / DSM 6875 / VKM B-1610 / KT).